The following is a 342-amino-acid chain: MIIAVGMSGGVDSSVAAYLLKEQGHDVIGVTLRFYKEECKENARVCCSPKDVQDARIVCDMLGIPHITLDWENLFKERVIDYFIKSYKTGLTPNPCAICNKDVKTAFLGFYLKQTADIDFLATGHYVIKEEGKIKRAKEKDQSYFMALVPKQSLDYLMFPVGYMTKQEIRDIAKKINLPVANKIESQDVCFLKGMDLEDYLSQFIDMTQGDIVHIATQKTLGKHKGIHRYTIGQRHGLGVSYHKPLYVVEKDIEKNILYVGEKEYLLKDAITLKDYNKLEDFEKDNMYIQIRYNSKPIPIKHIEENKDNVIIFLKEPATQVAKGQVGAIYFGDILLGGGIIS.

Residues Gly6 to Ser13 and Leu32 contribute to the ATP site. Catalysis depends on Cys99, which acts as the Nucleophile. A disulfide bridge links Cys99 with Cys190. Gly124 provides a ligand contact to ATP. The segment at Lys140–Gln142 is interaction with tRNA. Catalysis depends on Cys190, which acts as the Cysteine persulfide intermediate. The interval Arg292 to Tyr293 is interaction with tRNA.

The protein belongs to the MnmA/TRMU family.

It is found in the cytoplasm. It carries out the reaction S-sulfanyl-L-cysteinyl-[protein] + uridine(34) in tRNA + AH2 + ATP = 2-thiouridine(34) in tRNA + L-cysteinyl-[protein] + A + AMP + diphosphate + H(+). In terms of biological role, catalyzes the 2-thiolation of uridine at the wobble position (U34) of tRNA, leading to the formation of s(2)U34. The chain is tRNA-specific 2-thiouridylase MnmA from Hydrogenobaculum sp. (strain Y04AAS1).